The primary structure comprises 61 residues: U-stichotoxin-Hcr1a (61 aa).

The first 21 residues, 1 to 21 (MKPAIFLMLFVAMFLISEGEG), serve as a signal peptide directing secretion. Positions 22 to 31 (FKPKDAPQER) are excised as a propeptide. Pro36 bears the Hydroxyproline mark. 2 disulfide bridges follow: Cys41/Cys53 and Cys44/Cys59.

Belongs to the Hau1a/HC18/HC19 family.

It is found in the secreted. Its subcellular location is the nematocyst. In terms of biological role, toxin that is lethal to crab. Does not produce the typical symptoms associated with sodium channel toxins in crabs, suggesting that it likely does not act on sodium channels. The protein is U-stichotoxin-Hcr1a of Radianthus crispa (Leathery sea anemone).